The following is an 888-amino-acid chain: Serine/arginine repetitive matrix protein 1 (888 aa).

The PWI domain maps to 27 to 126 (QLKFAECLEK…AGIPTAFLEL (100 aa)). Over residues 139–169 (EKLASMKKQDEDKEKRDKEDKDNREKRDRSR) the composition is skewed to basic and acidic residues. The disordered stretch occupies residues 139–888 (EKLASMKKQD…MRKAQVSPPS (750 aa)). Residues 170 to 206 (SPRRRKSRSPSPRRRSSPIRRERKRSHSRSPHHRTKS) are compositionally biased toward basic residues. Composition is skewed to basic and acidic residues over residues 213–232 (PEKK…KETV) and 254–276 (ETKE…EKTR). Basic residues-rich tracts occupy residues 277 to 325 (QRSP…RTPP) and 332 to 347 (PRHR…RRRS). 2 stretches are compositionally biased toward low complexity: residues 348-364 (SASL…SRSR) and 473-496 (SVQQ…SSSS). Basic residues-rich tracts occupy residues 528-554 (PRKR…RRRS) and 561-585 (PRRR…RSPS). The segment covering 586-598 (PRRYSPPIQRRYS) has biased composition (low complexity). 2 stretches are compositionally biased toward basic residues: residues 614 to 629 (PKRR…RRVS) and 642 to 656 (AKRR…HRKG). Basic and acidic residues predominate over residues 662-677 (SNRETRSPPQNKRDSP). 3 stretches are compositionally biased toward low complexity: residues 697–712 (ASAS…PSTR), 728–749 (ASTP…SGSP), and 763–775 (ARSR…WSPA). Polar residues predominate over residues 780-790 (SPTQSPSPARN). Basic residues predominate over residues 798 to 823 (KKKKKKKDKKHKKDKKHKKHKKHKKE). Residues 826–843 (AVAAAPAAVAAADTTSAQ) show a composition bias toward low complexity. A compositionally biased stretch (basic and acidic residues) spans 866-876 (DLEKHLREKAL).

This sequence belongs to the splicing factor SR family.

Its subcellular location is the nucleus. Involved in pre-mRNA splicing and processing events. The protein is Serine/arginine repetitive matrix protein 1 (SRRM1) of Gallus gallus (Chicken).